The primary structure comprises 382 residues: MIPRPHGGKLVNRIVSSKRRTALLKETHELPSIEISYERLIDLLDIANGAFSPLEGFMVQEDYLHVLYDMRLSNDLPWTIPVILDVDPEEISNVKEGDDIALKYKDEIYAIMRVEEIYGWDKKEYARQVYKTTDPNHPGVAKTYQRKELLLGGTIDLLNQPHHPLEHRILWPIETRVLFREKKWRTIVAFQTRNVPHRGHEYVQKAALTFTDGLFIHPLIGWKKPGDYRDEVIFAAYEALIKHYYPDNVVVLAGLMMNMNYAGPREAVHHAIVRKNFGATHFIVGRDHAGVGDYYKPYEAWEIFDEFPDLGITPLFIREAFYCKKCGGMVNEKICPHGEEYRIRISGTKLREIIKKGITPPEYMMRPEVAKVILSFKDPFVH.

The protein belongs to the sulfate adenylyltransferase family.

The catalysed reaction is sulfate + ATP + H(+) = adenosine 5'-phosphosulfate + diphosphate. It functions in the pathway sulfur metabolism; hydrogen sulfide biosynthesis; sulfite from sulfate: step 1/3. In Staphylothermus marinus (strain ATCC 43588 / DSM 3639 / JCM 9404 / F1), this protein is Sulfate adenylyltransferase.